A 702-amino-acid polypeptide reads, in one-letter code: Ferrioxamine B receptor (702 aa).

The signal sequence occupies residues 1 to 30 (MPLEMFMFATTRMALLIGGAIGGATFPLFA). The 114-residue stretch at 55-168 (PDIETPQSVS…PGGIVALTSR (114 aa)) folds into the TBDR plug domain. The TBDR beta-barrel domain maps to 173-702 (DAGGEVKLFA…SIVGSVSWAF (530 aa)).

It belongs to the TonB-dependent receptor family.

It is found in the cell outer membrane. Ferrioxamine binding and uptake, in association with the TonB protein. This is Ferrioxamine B receptor (foxA) from Salmonella typhimurium (strain LT2 / SGSC1412 / ATCC 700720).